The sequence spans 658 residues: Exoribonuclease 2 (658 aa).

Positions 189–530 constitute an RNB domain; the sequence is REDLTSLYFT…VNHRLIKQVL (342 aa). The region spanning 576–658 is the S1 motif domain; the sequence is AVEFDCEIAD…ETRSIVGNII (83 aa).

It belongs to the RNR ribonuclease family. RNase II subfamily.

The protein resides in the cytoplasm. The catalysed reaction is Exonucleolytic cleavage in the 3'- to 5'-direction to yield nucleoside 5'-phosphates.. Its function is as follows. Involved in mRNA degradation. Hydrolyzes single-stranded polyribonucleotides processively in the 3' to 5' direction. The chain is Exoribonuclease 2 from Actinobacillus pleuropneumoniae serotype 3 (strain JL03).